The chain runs to 309 residues: Cytochrome c biogenesis protein CcsA (309 aa).

Helical transmembrane passes span 18 to 38, 43 to 63, 67 to 87, 102 to 122, 148 to 168, 216 to 236, 250 to 267, and 279 to 299; these read LGLLVFYILLVNLPISLGAFF, FFIVRVLTILINFLITLQLLF, ISGHFPISNLYESLYFLTWGI, IIPSIAIPIELLTVAFACFVL, VMLSYAALIIGSLLSASVLFI, SILIGFVLLTLGLISGAVWAN, TWAFISWMFYAAYLHMRI, and LATTGFLVVLICYLGVNFLGI.

Belongs to the CcmF/CycK/Ccl1/NrfE/CcsA family. May interact with ccs1.

It is found in the cellular thylakoid membrane. In terms of biological role, required during biogenesis of c-type cytochromes (cytochrome c6 and cytochrome f) at the step of heme attachment. This is Cytochrome c biogenesis protein CcsA from Prochlorococcus marinus (strain MIT 9215).